The following is a 154-amino-acid chain: Myoglobin (154 aa).

In terms of domain architecture, Globin spans 2–148 (GLSDGEWQLV…FRKDMASNYK (147 aa)). The residue at position 4 (serine 4) is a Phosphoserine. Histidine 65 serves as a coordination point for nitrite. Histidine 65 is a binding site for O2. Threonine 68 carries the phosphothreonine modification. Histidine 94 provides a ligand contact to heme b.

The protein belongs to the globin family. As to quaternary structure, monomeric.

Its subcellular location is the cytoplasm. The protein resides in the sarcoplasm. The catalysed reaction is Fe(III)-heme b-[protein] + nitric oxide + H2O = Fe(II)-heme b-[protein] + nitrite + 2 H(+). It catalyses the reaction H2O2 + AH2 = A + 2 H2O. In terms of biological role, monomeric heme protein which primary function is to store oxygen and facilitate its diffusion within muscle tissues. Reversibly binds oxygen through a pentacoordinated heme iron and enables its timely and efficient release as needed during periods of heightened demand. Depending on the oxidative conditions of tissues and cells, and in addition to its ability to bind oxygen, it also has a nitrite reductase activity whereby it regulates the production of bioactive nitric oxide. Under stress conditions, like hypoxia and anoxia, it also protects cells against reactive oxygen species thanks to its pseudoperoxidase activity. The polypeptide is Myoglobin (MB) (Pongo pygmaeus (Bornean orangutan)).